The primary structure comprises 130 residues: Albumin-1 B (130 aa).

The signal sequence occupies residues 1–26 (MASVKLASLMVLFATLGMFLTKNVGA). 3 cysteine pairs are disulfide-bonded: C29/C46, C33/C48, and C41/C58. Propeptides lie at residues 64–69 (VFLRTN) and 123–130 (LLKSVSTA).

The C-terminal glycine may be removed from PA1b. In terms of tissue distribution, major component of both the cotyledons and embryonic axes of mature seeds.

In terms of biological role, PA1b binds to basic 7S globulin (BG) and stimulates its phosphorylation activity. Involved in the signal transduction system to regulate the growth and differentiation as a hormone peptide. Toxic to various insects through binding to a high affinity binding site in the insect gut. This chain is Albumin-1 B, found in Pisum sativum (Garden pea).